We begin with the raw amino-acid sequence, 150 residues long: Male-specific protein scotti (150 aa).

Residues 60 to 84 (PPMAVFPARGGPNGGPPRLRKKRSF) are disordered. N-linked (GlcNAc...) asparagine glycosylation is present at asparagine 131.

The protein belongs to the male-specific scotti family.

Its function is as follows. Post-meiotically transcribed gene that has a role in late spermiogenesis; required for actin cone progression during spermatid individualization. This chain is Male-specific protein scotti, found in Drosophila yakuba (Fruit fly).